A 429-amino-acid chain; its full sequence is 3-phosphoshikimate 1-carboxyvinyltransferase (429 aa).

3 residues coordinate 3-phosphoshikimate: K23, S24, and R28. Position 23 (K23) interacts with phosphoenolpyruvate. The phosphoenolpyruvate site is built by G94 and R126. 7 residues coordinate 3-phosphoshikimate: S171, S172, Q173, S199, D316, N339, and K343. Q173 lines the phosphoenolpyruvate pocket. D316 functions as the Proton acceptor in the catalytic mechanism. Phosphoenolpyruvate is bound by residues R347, R389, and K414.

It belongs to the EPSP synthase family. In terms of assembly, monomer.

It localises to the cytoplasm. The catalysed reaction is 3-phosphoshikimate + phosphoenolpyruvate = 5-O-(1-carboxyvinyl)-3-phosphoshikimate + phosphate. Its pathway is metabolic intermediate biosynthesis; chorismate biosynthesis; chorismate from D-erythrose 4-phosphate and phosphoenolpyruvate: step 6/7. Its function is as follows. Catalyzes the transfer of the enolpyruvyl moiety of phosphoenolpyruvate (PEP) to the 5-hydroxyl of shikimate-3-phosphate (S3P) to produce enolpyruvyl shikimate-3-phosphate and inorganic phosphate. The polypeptide is 3-phosphoshikimate 1-carboxyvinyltransferase (Idiomarina loihiensis (strain ATCC BAA-735 / DSM 15497 / L2-TR)).